We begin with the raw amino-acid sequence, 170 residues long: ATP synthase subunit b (170 aa).

Residues 5–25 form a helical membrane-spanning segment; sequence YFIPCLLLPTMMLASGGGGET.

It belongs to the ATPase B chain family. F-type ATPases have 2 components, F(1) - the catalytic core - and F(0) - the membrane proton channel. F(1) has five subunits: alpha(3), beta(3), gamma(1), delta(1), epsilon(1). F(0) has three main subunits: a(1), b(2) and c(10-14). The alpha and beta chains form an alternating ring which encloses part of the gamma chain. F(1) is attached to F(0) by a central stalk formed by the gamma and epsilon chains, while a peripheral stalk is formed by the delta and b chains.

It is found in the cell inner membrane. F(1)F(0) ATP synthase produces ATP from ADP in the presence of a proton or sodium gradient. F-type ATPases consist of two structural domains, F(1) containing the extramembraneous catalytic core and F(0) containing the membrane proton channel, linked together by a central stalk and a peripheral stalk. During catalysis, ATP synthesis in the catalytic domain of F(1) is coupled via a rotary mechanism of the central stalk subunits to proton translocation. Its function is as follows. Component of the F(0) channel, it forms part of the peripheral stalk, linking F(1) to F(0). The polypeptide is ATP synthase subunit b (Wolinella succinogenes (strain ATCC 29543 / DSM 1740 / CCUG 13145 / JCM 31913 / LMG 7466 / NCTC 11488 / FDC 602W) (Vibrio succinogenes)).